The primary structure comprises 69 residues: Putative membrane protein insertion efficiency factor (69 aa).

The protein belongs to the UPF0161 family.

It localises to the cell inner membrane. Its function is as follows. Could be involved in insertion of integral membrane proteins into the membrane. The sequence is that of Putative membrane protein insertion efficiency factor from Geobacter sulfurreducens (strain ATCC 51573 / DSM 12127 / PCA).